A 337-amino-acid chain; its full sequence is Inositol 2-dehydrogenase (337 aa).

Belongs to the Gfo/Idh/MocA family. Homotetramer.

It catalyses the reaction myo-inositol + NAD(+) = scyllo-inosose + NADH + H(+). In terms of biological role, involved in the oxidation of myo-inositol (MI) to 2-keto-myo-inositol (2KMI or 2-inosose). The polypeptide is Inositol 2-dehydrogenase (Pseudarthrobacter chlorophenolicus (strain ATCC 700700 / DSM 12829 / CIP 107037 / JCM 12360 / KCTC 9906 / NCIMB 13794 / A6) (Arthrobacter chlorophenolicus)).